The chain runs to 803 residues: Translation initiation factor IF-2 (803 aa).

Positions 65–75 are enriched in basic and acidic residues; that stretch reads PDKVEEKKEHT. The disordered stretch occupies residues 65–186; that stretch reads PDKVEEKKEH…PKSRKSKTLK (122 aa). Residues 175–185 are compositionally biased toward basic residues; it reads NKPKSRKSKTL. Residues 300-468 form the tr-type G domain; sequence IRPPVVTIMG…ILLTADAALE (169 aa). Residues 309-316 form a G1 region; it reads GHVDHGKT. Residue 309–316 coordinates GTP; the sequence is GHVDHGKT. The segment at 334 to 338 is G2; that stretch reads GITQH. The segment at 355 to 358 is G3; the sequence is DTPG. GTP contacts are provided by residues 355-359 and 409-412; these read DTPGH and NKID. Residues 409-412 form a G4 region; sequence NKID. The tract at residues 445 to 447 is G5; it reads SAK.

Belongs to the TRAFAC class translation factor GTPase superfamily. Classic translation factor GTPase family. IF-2 subfamily.

It is found in the cytoplasm. Its function is as follows. One of the essential components for the initiation of protein synthesis. Protects formylmethionyl-tRNA from spontaneous hydrolysis and promotes its binding to the 30S ribosomal subunits. Also involved in the hydrolysis of GTP during the formation of the 70S ribosomal complex. This chain is Translation initiation factor IF-2, found in Tropheryma whipplei (strain Twist) (Whipple's bacillus).